A 695-amino-acid chain; its full sequence is WD repeat-containing protein 93 (695 aa).

Residues 1–35 (MSSFKGNQAQKRRLSVFPKGPLEIPSPTEADWPKD) form a disordered region. The WD repeat unit spans residues 421 to 460 (PCAAPIVMSQISSFSSYLALVCEDGVLILWDLAEGFLFGV).

As to expression, testis-specific. Expressed in spermatogonia, spermatocytes and spermatids.

This Mus musculus (Mouse) protein is WD repeat-containing protein 93 (Wdr93).